The sequence spans 469 residues: Argininosuccinate lyase (469 aa).

It belongs to the lyase 1 family. Argininosuccinate lyase subfamily.

The protein resides in the cytoplasm. The catalysed reaction is 2-(N(omega)-L-arginino)succinate = fumarate + L-arginine. It participates in amino-acid biosynthesis; L-arginine biosynthesis; L-arginine from L-ornithine and carbamoyl phosphate: step 3/3. This chain is Argininosuccinate lyase, found in Burkholderia mallei (strain NCTC 10247).